Here is a 191-residue protein sequence, read N- to C-terminus: tRNA-specific adenosine deaminase 2 (191 aa).

Residues 20-145 (EETEKWMEQA…SVLDIASADL (126 aa)) form the CMP/dCMP-type deaminase domain. Zn(2+) is bound at residue His71. Residue Glu73 is the Proton donor of the active site. Zn(2+) contacts are provided by Cys107 and Cys110.

The protein belongs to the cytidine and deoxycytidylate deaminase family. ADAT2 subfamily. It depends on Zn(2+) as a cofactor.

The enzyme catalyses adenosine(34) in tRNA + H2O + H(+) = inosine(34) in tRNA + NH4(+). Probably participates in deamination of adenosine-34 to inosine in many tRNAs. The chain is tRNA-specific adenosine deaminase 2 (DEADC1) from Bos taurus (Bovine).